The sequence spans 513 residues: ATP synthase subunit alpha (513 aa).

Position 169–176 (169–176 (GDRQTGKT)) interacts with ATP.

The protein belongs to the ATPase alpha/beta chains family. In terms of assembly, F-type ATPases have 2 components, CF(1) - the catalytic core - and CF(0) - the membrane proton channel. CF(1) has five subunits: alpha(3), beta(3), gamma(1), delta(1), epsilon(1). CF(0) has three main subunits: a(1), b(2) and c(9-12). The alpha and beta chains form an alternating ring which encloses part of the gamma chain. CF(1) is attached to CF(0) by a central stalk formed by the gamma and epsilon chains, while a peripheral stalk is formed by the delta and b chains.

The protein localises to the cell inner membrane. It carries out the reaction ATP + H2O + 4 H(+)(in) = ADP + phosphate + 5 H(+)(out). In terms of biological role, produces ATP from ADP in the presence of a proton gradient across the membrane. The alpha chain is a regulatory subunit. In Actinobacillus pleuropneumoniae serotype 7 (strain AP76), this protein is ATP synthase subunit alpha.